Here is a 394-residue protein sequence, read N- to C-terminus: Elongation factor Tu (394 aa).

A tr-type G domain is found at 10 to 204 (LPHVNIGTIG…AVDEYIPTPT (195 aa)). Residues 19–26 (GHVDHGKT) are G1. GTP is bound at residue 19–26 (GHVDHGKT). Thr26 contacts Mg(2+). Residues 60–64 (GITIN) form a G2 region. Positions 81-84 (DCPG) are G3. GTP contacts are provided by residues 81–85 (DCPGH) and 136–139 (NKCD). Residues 136 to 139 (NKCD) are G4. The G5 stretch occupies residues 174-176 (SAL).

This sequence belongs to the TRAFAC class translation factor GTPase superfamily. Classic translation factor GTPase family. EF-Tu/EF-1A subfamily. In terms of assembly, monomer.

Its subcellular location is the cytoplasm. The catalysed reaction is GTP + H2O = GDP + phosphate + H(+). In terms of biological role, GTP hydrolase that promotes the GTP-dependent binding of aminoacyl-tRNA to the A-site of ribosomes during protein biosynthesis. This is Elongation factor Tu from Mesoplasma florum (strain ATCC 33453 / NBRC 100688 / NCTC 11704 / L1) (Acholeplasma florum).